The primary structure comprises 287 residues: 2-dehydro-3-deoxyphosphooctonate aldolase (287 aa).

This sequence belongs to the KdsA family.

The protein resides in the cytoplasm. It catalyses the reaction D-arabinose 5-phosphate + phosphoenolpyruvate + H2O = 3-deoxy-alpha-D-manno-2-octulosonate-8-phosphate + phosphate. It participates in carbohydrate biosynthesis; 3-deoxy-D-manno-octulosonate biosynthesis; 3-deoxy-D-manno-octulosonate from D-ribulose 5-phosphate: step 2/3. Its pathway is bacterial outer membrane biogenesis; lipopolysaccharide biosynthesis. The polypeptide is 2-dehydro-3-deoxyphosphooctonate aldolase (Rhodopseudomonas palustris (strain TIE-1)).